The primary structure comprises 649 residues: Endoplasmic reticulum membrane protein 65 (649 aa).

A disordered region spans residues 1 to 55; it reads MGSNTSPGQADPLESENESSLTSRFLPNKRDGGKDNESVIPEKEEPDLNEPVLAV. The Cytoplasmic segment spans residues 1 to 165; that stretch reads MGSNTSPGQA…LATPYAIEKT (165 aa). Positions 28–43 are enriched in basic and acidic residues; the sequence is NKRDGGKDNESVIPEK. Ser-94 bears the Phosphoserine mark. Residues 166–186 traverse the membrane as a helical segment; sequence FLFGWFVSVDSFLYIFTLFPI. Residues 187–302 are Lumenal-facing; the sequence is RVLISFFTLS…NFWNPAGWMT (116 aa). N-linked (GlcNAc...) asparagine glycosylation is present at Asn-215. The helical transmembrane segment at 303-323 threads the bilayer; sequence FFYYFAISLAYMVLHTLVLLY. At 324-366 the chain is on the cytoplasmic side; it reads QIITLNVTVNSYSNAVLALLMSNQLVEIKGAVFKKFEKENLFQ. The chain crosses the membrane as a helical span at residues 367 to 387; it reads LTCSDVVERFQITIMVIIIFL. The Lumenal segment spans residues 388-414; sequence RNLAELYTTSSLDQPLLTFKRLKTLLA. Residues 415-435 form a helical membrane-spanning segment; sequence PFFWVIGSELFVDWLKHAFII. Residues 436–479 are Cytoplasmic-facing; the sequence is KFNYIKPSIYSRFTDVLCHDYVASGAQLTQTVTGCSQQVARRMG. The chain crosses the membrane as a helical span at residues 480–500; sequence LPVLPLVCVFIRTSMQTWSMF. The Lumenal segment spans residues 501-557; that stretch reads RSTHSMKQEIAKSIGTIFPTKDNYVYYLPNKEANTYNAGKEASWETLLLSVVRGKSG. Residues 558-578 traverse the membrane as a helical segment; the sequence is IAFLFFMAIMLKLLLGKAILA. Residues 579–649 are Cytoplasmic-facing; the sequence is ITQSRYESMQ…RYAMHSKRIW (71 aa).

This sequence belongs to the TAPT1 family. In terms of assembly, interacts with slp1.

Its subcellular location is the endoplasmic reticulum membrane. Its function is as follows. May be involved in membrane protein folding. The chain is Endoplasmic reticulum membrane protein 65 from Schizosaccharomyces pombe (strain 972 / ATCC 24843) (Fission yeast).